The sequence spans 691 residues: Elongation factor G 1 (691 aa).

The tr-type G domain occupies 8–282; that stretch reads ERVRNIGIAA…AVVDYLPAPQ (275 aa). Residues 17 to 24, 81 to 85, and 135 to 138 contribute to the GTP site; these read AHIDAGKT, DTPGH, and NKMD.

It belongs to the TRAFAC class translation factor GTPase superfamily. Classic translation factor GTPase family. EF-G/EF-2 subfamily.

It localises to the cytoplasm. In terms of biological role, catalyzes the GTP-dependent ribosomal translocation step during translation elongation. During this step, the ribosome changes from the pre-translocational (PRE) to the post-translocational (POST) state as the newly formed A-site-bound peptidyl-tRNA and P-site-bound deacylated tRNA move to the P and E sites, respectively. Catalyzes the coordinated movement of the two tRNA molecules, the mRNA and conformational changes in the ribosome. The protein is Elongation factor G 1 of Trichodesmium erythraeum (strain IMS101).